An 84-amino-acid chain; its full sequence is Beta-defensin 119 (84 aa).

An N-terminal signal peptide occupies residues 1–21 (MKLLYLFLAILLVIEEPVISG). 3 disulfide bridges follow: C28–C55, C35–C49, and C39–C56.

This sequence belongs to the beta-defensin family.

Its subcellular location is the secreted. Has antibacterial activity. This Pongo pygmaeus (Bornean orangutan) protein is Beta-defensin 119 (DEFB119).